Consider the following 252-residue polypeptide: C4b-binding protein beta chain (252 aa).

The signal sequence occupies residues 1–17 (MFFWCACCLMVAWRVSA). 3 Sushi domains span residues 21-78 (EHCP…ECRL), 79-136 (GHCP…ICKS), and 137-193 (RDCD…VCKL). Disulfide bonds link cysteine 23–cysteine 63, cysteine 49–cysteine 76, cysteine 81–cysteine 121, cysteine 107–cysteine 134, cysteine 139–cysteine 179, and cysteine 165–cysteine 191. 5 N-linked (GlcNAc...) asparagine glycosylation sites follow: asparagine 64, asparagine 71, asparagine 98, asparagine 117, and asparagine 154.

As to quaternary structure, disulfide-linked complex of alpha and beta chains of 3 possible sorts: a 570 kDa complex of 7 alpha chains and 1 beta chain, a 530 kDa homoheptamer of alpha chains or a 500 kDa complex of 6 alpha chains and 1 beta chain. The central body of the alpha chain homomer supports tentacles, each with the binding site for C4b at the end.

It is found in the secreted. Its function is as follows. Controls the classical pathway of complement activation. It binds as a cofactor to C3b/C4b inactivator (C3bINA), which then hydrolyzes the complement fragment C4b. It also accelerates the degradation of the C4bC2a complex (C3 convertase) by dissociating the complement fragment C2a. It also interacts with anticoagulant protein S and with serum amyloid P component. The beta chain binds protein S. In Homo sapiens (Human), this protein is C4b-binding protein beta chain (C4BPB).